Here is a 115-residue protein sequence, read N- to C-terminus: Large ribosomal subunit protein bL19 (115 aa).

Belongs to the bacterial ribosomal protein bL19 family.

Its function is as follows. This protein is located at the 30S-50S ribosomal subunit interface and may play a role in the structure and function of the aminoacyl-tRNA binding site. The sequence is that of Large ribosomal subunit protein bL19 from Desulforudis audaxviator (strain MP104C).